The chain runs to 701 residues: Elongation factor G (701 aa).

In terms of domain architecture, tr-type G spans 8–290; that stretch reads TQYRNIGISA…AIIEYLPSPK (283 aa). GTP contacts are provided by residues 17–24, 88–92, and 142–145; these read AHIDAGKT, DTPGH, and NKMD.

It belongs to the TRAFAC class translation factor GTPase superfamily. Classic translation factor GTPase family. EF-G/EF-2 subfamily.

Its subcellular location is the cytoplasm. Catalyzes the GTP-dependent ribosomal translocation step during translation elongation. During this step, the ribosome changes from the pre-translocational (PRE) to the post-translocational (POST) state as the newly formed A-site-bound peptidyl-tRNA and P-site-bound deacylated tRNA move to the P and E sites, respectively. Catalyzes the coordinated movement of the two tRNA molecules, the mRNA and conformational changes in the ribosome. The chain is Elongation factor G from Buchnera aphidicola subsp. Cinara cedri (strain Cc).